Here is a 1009-residue protein sequence, read N- to C-terminus: Type VII secretion system accessory factor EsaA (1009 aa).

Residues 7 to 27 traverse the membrane as a helical segment; the sequence is IYALIVTLIIIIAIVSMIFFV. The span at 680 to 697 shows a compositional bias: basic and acidic residues; that stretch reads TFAEEPQEPKIDKGKNDE. Positions 680–707 are disordered; the sequence is TFAEEPQEPKIDKGKNDEFNTMSSNLDK. 5 consecutive transmembrane segments (helical) span residues 822 to 842, 869 to 889, 903 to 923, 928 to 948, and 979 to 999; these read ISPT…AYIF, VITS…VGLI, KFIL…TYLL, SIGM…MNNL, and IGLV…LNMF.

The protein belongs to the EsaA family. Homodimer. Interacts with EssB.

It localises to the cell membrane. Its function is as follows. Component of the type VII secretion system (Ess). Provides together with EssB and other components such as EssC and EssE a secretion plateform accross the cytoplasmic membrane in the host. The chain is Type VII secretion system accessory factor EsaA from Staphylococcus aureus (strain USA300).